We begin with the raw amino-acid sequence, 563 residues long: Nigrin b (563 aa).

Positions 1–25 (MRVVAAAMLYFYIVVLAICSVGIQG) are cleaved as a signal peptide. E188 is a catalytic residue. The N-linked (GlcNAc...) asparagine glycan is linked to N221. Disulfide bonds link C274/C302, C319/C338, and C360/C377. Ricin B-type lectin domains are found at residues 305 to 431 (RTSF…WTVT) and 434 to 559 (VKPI…WVTQ). Residues 316-356 (DGLCVDVRNGYDTDGTPLQLWPCGTQRNQRWTFDSDDTIRS) form a 1-alpha repeat. Residues 357–397 (MGKCMTANGLNNGSNIVIFNCSTAAENAIKWEVPIDGSIIN) form a 1-beta repeat. N-linked (GlcNAc...) asparagine glycans are attached at residues N368 and N376. Residues 400 to 432 (SGLVMTAPRAASRTILLLEDNIYAASQGWTVTN) form a 1-gamma repeat. A 2-alpha repeat occupies 445 to 482 (KEMCLQSNGENNGVWMEDCEATSLQQQWALYGDRTIRV). C448 and C463 are oxidised to a cystine. N-linked (GlcNAc...) asparagine glycosylation occurs at N483. One copy of the 2-beta repeat lies at 486-524 (RGLCVTTNGYNSKDLIIILKCQGLPSQRWFFNSDGAIVN). The cysteines at positions 489 and 506 are disulfide-linked. The 2-gamma repeat unit spans residues 527–554 (SRHVMDVRASNVSLREIIIFPATGNPNQ). N-linked (GlcNAc...) asparagine glycosylation occurs at N537.

This sequence in the N-terminal section; belongs to the ribosome-inactivating protein family. Type 2 RIP subfamily. As to quaternary structure, disulfide-linked dimer of A and B chains.

The enzyme catalyses Endohydrolysis of the N-glycosidic bond at one specific adenosine on the 28S rRNA.. In terms of biological role, non-toxic type 2 RIP which strongly inhibits mammalian protein synthesis but does not affect plant nor bacterial protein synthesis. The A chain is responsible for inhibiting protein synthesis through the catalytic inactivation of 60S ribosomal subunits by removing adenine from position 4,324 of 28S rRNA. Functionally, the B chain is a galactose-specific lectin that facilitates the binding of nigrin b to the cell membrane that precedes endocytosis. This is Nigrin b from Sambucus nigra (European elder).